Reading from the N-terminus, the 950-residue chain is Protocadherin alpha-9 (950 aa).

Residues 1–29 (MLYSSRGDPEGQPLLLSLLILAMWVVGSG) form the signal peptide. Cadherin domains are found at residues 30-133 (QLHY…PPVF), 134-242 (PATQ…APVF), 243-350 (DRTL…APQL), 351-455 (TIKT…APAF), 456-565 (AQPE…APAL), and 588-678 (GVVV…APKS). Over 30 to 697 (QLHYSVPEEA…GPEVTLVDVN (668 aa)) the chain is Extracellular. N-linked (GlcNAc...) asparagine glycosylation is found at asparagine 254 and asparagine 265. The N-linked (GlcNAc...) asparagine glycan is linked to asparagine 548. A helical transmembrane segment spans residues 698–718 (VYLIIAICAVSSLLVLTLLLY). The Cytoplasmic portion of the chain corresponds to 719-950 (TVLRCSAMPT…GNSTTDNSDQ (232 aa)). A PXXP 1 repeat occupies 734 to 737 (PGKP). The segment at 734–894 (PGKPTLVCSS…PDKFIIPGSP (161 aa)) is 5 X 4 AA repeats of P-X-X-P. Disordered regions lie at residues 759–808 (CSGE…DWRY) and 827–950 (ILRA…NSDQ). Residues 789-798 (PSASSDSSGK) are compositionally biased toward polar residues. PXXP repeat units lie at residues 799–802 (PRQP), 832–835 (PGGP), 873–876 (PGNP), and 891–894 (PGSP). Over residues 909-923 (DKSDFITFGKKEETK) the composition is skewed to basic and acidic residues.

The protein localises to the cell membrane. Its function is as follows. Potential calcium-dependent cell-adhesion protein. May be involved in the establishment and maintenance of specific neuronal connections in the brain. This chain is Protocadherin alpha-9 (PCDHA9), found in Pan troglodytes (Chimpanzee).